A 43-amino-acid polypeptide reads, in one-letter code: Protein PsbN (43 aa).

A helical transmembrane segment spans residues 5-27 (TLVTISISCLLVSFTGYAIYTSF).

It belongs to the PsbN family.

It localises to the plastid. It is found in the chloroplast thylakoid membrane. Its function is as follows. May play a role in photosystem I and II biogenesis. In Welwitschia mirabilis (Tree tumbo), this protein is Protein PsbN.